The following is an 846-amino-acid chain: Spindle pole body component SPC98 (846 aa).

2 positions are modified to phosphoserine: serine 124 and serine 136.

This sequence belongs to the TUBGCP family. As to quaternary structure, interacts with TUB4, SPC72 and SPC97.

It is found in the nucleus. Its subcellular location is the cytoplasm. The protein localises to the cytoskeleton. It localises to the microtubule organizing center. The protein resides in the spindle pole body. In terms of biological role, involved in microtubule organization by the microtubule organizing center, the spindle pole body (SPB). Probably part of the microtubule attachment site at the SPB. The chain is Spindle pole body component SPC98 (SPC98) from Saccharomyces cerevisiae (strain ATCC 204508 / S288c) (Baker's yeast).